Consider the following 337-residue polypeptide: Large ribosomal subunit protein uL3 (337 aa).

This sequence belongs to the universal ribosomal protein uL3 family. As to quaternary structure, part of the 50S ribosomal subunit. Forms a cluster with proteins L14 and L24e.

Functionally, one of the primary rRNA binding proteins, it binds directly near the 3'-end of the 23S rRNA, where it nucleates assembly of the 50S subunit. This Methanosphaerula palustris (strain ATCC BAA-1556 / DSM 19958 / E1-9c) protein is Large ribosomal subunit protein uL3.